An 85-amino-acid polypeptide reads, in one-letter code: Large ribosomal subunit protein bL27 (85 aa).

Residues 1–20 (MAHKKAGGSTRNGRDSESKR) are disordered.

Belongs to the bacterial ribosomal protein bL27 family.

The sequence is that of Large ribosomal subunit protein bL27 from Azotobacter vinelandii (strain DJ / ATCC BAA-1303).